The following is a 338-amino-acid chain: Putative peptide import ATP-binding protein BruAb2_0796 (338 aa).

An ABC transporter domain is found at 7–263 (LDIEGLRTVF…PRHPYTMGLL (257 aa)). Position 43 to 50 (43 to 50 (GESGSGKS)) interacts with ATP.

The protein belongs to the ABC transporter superfamily. As to quaternary structure, the complex is composed of two ATP-binding proteins (BruAb2_0796 and BruAb2_0797), two transmembrane proteins (BruAb2_0794) and a solute-binding protein (BruAb2_0792).

The protein resides in the cell inner membrane. Functionally, probably part of an ABC transporter complex that could be involved in peptide import. Probably responsible for energy coupling to the transport system. The polypeptide is Putative peptide import ATP-binding protein BruAb2_0796 (Brucella abortus biovar 1 (strain 9-941)).